A 125-amino-acid chain; its full sequence is Basic leucine zipper transcriptional factor ATF-like (125 aa).

Positions 1 to 14 are enriched in low complexity; that stretch reads MPHSSDSSDSSFSR. The interval 1 to 58 is disordered; the sequence is MPHSSDSSDSSFSRSPPPGKQDSSDDVRRVQRREKNRIAAQKSRQRQTQKADTLHLES. A bZIP domain is found at 26–89; it reads DVRRVQRREK…KYFTSVLNSH (64 aa). The tract at residues 28–50 is basic motif; it reads RRVQRREKNRIAAQKSRQRQTQK. A Phosphoserine modification is found at S43. T48 carries the post-translational modification Phosphothreonine. The segment at 54–75 is leucine-zipper; sequence LHLESEDLEKQNAALRKEIKQL.

The protein belongs to the bZIP family. In terms of assembly, heterodimer; mainly heterodimerizes with JUNB. The BATF-JUNB heterodimer interacts with IRF4 and IRF8. Interacts (via bZIP domain) with IRF4 and IRF8; the interaction is direct. Also forms heterodimers with JUN and JUND. Also interacts with IFI35. Phosphorylated on serine and threonine residues and at least one tyrosine residue. Phosphorylation at Ser-43 inhibit DNA binding activity and transforms it as a negative regulator of AP-1 mediated transcription. Post-translationally, phosphorylated. As to expression, expressed at highest levels in lung, and at lower levels in placenta, liver, kidney, spleen, and peripheral blood. Detected in SW480 colorectal cancer cell line and several hematopoietic tumor cell lines, including Raji Burkitt's lymphoma. Strongly expressed in mature B- and T-lymphocytes. Also expressed in moderate levels in lymph node and appendix and at low levels in thymus and bone marrow.

Its subcellular location is the nucleus. The protein localises to the cytoplasm. Its function is as follows. AP-1 family transcription factor that controls the differentiation of lineage-specific cells in the immune system: specifically mediates the differentiation of T-helper 17 cells (Th17), follicular T-helper cells (TfH), CD8(+) dendritic cells and class-switch recombination (CSR) in B-cells. Acts via the formation of a heterodimer with JUNB that recognizes and binds DNA sequence 5'-TGA[CG]TCA-3'. The BATF-JUNB heterodimer also forms a complex with IRF4 (or IRF8) in immune cells, leading to recognition of AICE sequence (5'-TGAnTCA/GAAA-3'), an immune-specific regulatory element, followed by cooperative binding of BATF and IRF4 (or IRF8) and activation of genes. Controls differentiation of T-helper cells producing interleukin-17 (Th17 cells) by binding to Th17-associated gene promoters: regulates expression of the transcription factor RORC itself and RORC target genes such as IL17 (IL17A or IL17B). Also involved in differentiation of follicular T-helper cells (TfH) by directing expression of BCL6 and MAF. In B-cells, involved in class-switch recombination (CSR) by controlling the expression of both AICDA and of germline transcripts of the intervening heavy-chain region and constant heavy-chain region (I(H)-C(H)). Following infection, can participate in CD8(+) dendritic cell differentiation via interaction with IRF4 and IRF8 to mediate cooperative gene activation. Regulates effector CD8(+) T-cell differentiation by regulating expression of SIRT1. Following DNA damage, part of a differentiation checkpoint that limits self-renewal of hematopoietic stem cells (HSCs): up-regulated by STAT3, leading to differentiation of HSCs, thereby restricting self-renewal of HSCs. This is Basic leucine zipper transcriptional factor ATF-like (BATF) from Homo sapiens (Human).